The sequence spans 173 residues: Large ribosomal subunit protein bL9 (173 aa).

A disordered region spans residues 150–173; sequence KQEDKKSLSKKLNKADEQGERAEV.

This sequence belongs to the bacterial ribosomal protein bL9 family.

In terms of biological role, binds to the 23S rRNA. The sequence is that of Large ribosomal subunit protein bL9 from Borreliella burgdorferi (strain ZS7) (Borrelia burgdorferi).